The following is a 275-amino-acid chain: Phospholipid scramblase (275 aa).

The helical transmembrane segment at 256–272 threads the bilayer; sequence WKMMLLAFALFLDYMYY.

Belongs to the phospholipid scramblase family. As to quaternary structure, forms homooligomers in the presence of calcium. The cofactor is Ca(2+). Requires Mg(2+) as cofactor.

The protein resides in the membrane. It localises to the cell membrane. It carries out the reaction a 1,2-diacyl-sn-glycero-3-phosphoethanolamine(in) = a 1,2-diacyl-sn-glycero-3-phosphoethanolamine(out). In terms of biological role, catalyzes calcium-induced ATP-independent rapid bidirectional and non-specific movement of phospholipids (lipid scrambling or lipid flip-flop) between the inner and outer leaflet of the plasma membrane resulting in collapse of the phospholipid asymmetry. Preferentially, mediates calcium-dependent phosphatidylethanolamine externalization. During the liver stage, plays a role in the interaction with, and thus invasion of, host hepatocytes. Dispensable for host erythrocyte invasion and asexual parasite development. The polypeptide is Phospholipid scramblase (Plasmodium falciparum (isolate 3D7)).